Reading from the N-terminus, the 707-residue chain is MSPRQPLVLALLVLGCCSAAPRRRQPTLVVFPGELRTRLTDRQLAEEYLFRYGYTRVASMHGDSQSLRLPLLLLQKHLSLPETGELDNATLEAMRAPRCGVPDVGKFQTFEGDLKWHHHNITYWIQNYSEDLPRDVIDDAFARAFALWSAVTPLTFTRVYSRDADIVIQFGVAEHGDGYPFDGKDGLLAHAFPPGPGIQGDAHFDDEELWSLGKGVVVPTYFGNADGAPCHFPFTFEGRSYTACTTDGRSDGMAWCSTTADYDTDRRFGFCPSERLYTQDGNADGKPCEFPFIFQGRTYSACTTDGRSDGHRWCATTASYDKDKLYGFCPTRADSTVVGGNSAGELCVFPFVFLGKEYSSCTSEGRRDGRLWCATTSNFDSDKKWGFCPDKGYSLFLVAAHEFGHALGLDHSSVPERLMYPMYRYLEGSPLHEDDVRGIQHLYGPNPNPQPPATTTPEPQPTAPPTACPTWPATVRPSEHPTTSPTGAPSAGPTGPPTASPSAAPTASLDPAEDVCNVNVFDAIAEIGNKLHVFKDGRYWRFSEGSGRRPQGPFLIADTWPALPAKLDSAFEEPLTKKLFFFSGRQVWVYTGASVLGPRRLDKLGLGPEVPHVTGALPRAGGKVLLFGAQRFWRFDVKTQTVDSRSGAPVDQMFPGVPLNTHDVFQYREKAYFCQDRFFWRVSTRNEVNLVDQVGYVSFDILHCPED.

A signal peptide spans 1–19 (MSPRQPLVLALLVLGCCSA). A propeptide spans 20-106 (APRRRQPTLV…PRCGVPDVGK (87 aa)) (activation peptide). Residue Asn88 is glycosylated (N-linked (GlcNAc...) asparagine). Positions 97 to 104 (PRCGVPDV) match the Cysteine switch motif. Cys99 is a Zn(2+) binding site. Residues Asn120 and Asn127 are each glycosylated (N-linked (GlcNAc...) asparagine). The Ca(2+) site is built by Asp131 and Asp165. 2 residues coordinate Zn(2+): His175 and Asp177. 4 residues coordinate Ca(2+): Asp182, Gly183, Asp185, and Leu187. His190 contacts Zn(2+). Gly197, Gln199, and Asp201 together coordinate Ca(2+). His203 serves as a coordination point for Zn(2+). The Ca(2+) site is built by Asp205, Asp206, and Glu208. 3 Fibronectin type-II domains span residues 225–273 (ADGA…FCPS), 283–331 (ADGK…FCPT), and 342–390 (SAGE…FCPD). Disulfide bonds link Cys230/Cys256, Cys244/Cys271, Cys288/Cys314, Cys302/Cys329, Cys347/Cys373, and Cys361/Cys388. His401 is a binding site for Zn(2+). Glu402 is a catalytic residue. Positions 405 and 411 each coordinate Zn(2+). The tract at residues 437–508 (RGIQHLYGPN…ASPSAAPTAS (72 aa)) is disordered. Positions 446 to 467 (NPNPQPPATTTPEPQPTAPPTA) are enriched in pro residues. Residues 481-493 (PTTSPTGAPSAGP) show a composition bias toward low complexity. Cys516 and Cys704 are disulfide-bonded. Hemopexin repeat units follow at residues 518 to 563 (VNVF…WPAL), 564 to 608 (PAKL…GLGP), 610 to 657 (VPHV…FPGV), and 658 to 704 (PLNT…ILHC).

It belongs to the peptidase M10A family. As to quaternary structure, exists as monomer or homodimer; disulfide-linked. Also exists as heterodimer with LCN2. Macrophages and transformed cell lines produce only the monomeric form. Interacts with ECM1. The cofactor is Zn(2+). Ca(2+) serves as cofactor. N- and O-glycosylated. As to expression, osteoclasts.

The protein localises to the secreted. Its subcellular location is the extracellular space. It is found in the extracellular matrix. It catalyses the reaction Cleavage of gelatin types I and V and collagen types IV and V.. Its function is as follows. Matrix metalloproteinase that plays an essential role in local proteolysis of the extracellular matrix and in leukocyte migration. Could play a role in bone osteoclastic resorption. Cleaves KiSS1 at a Gly-|-Leu bond. Cleaves NINJ1 to generate the Secreted ninjurin-1 form. Cleaves type IV and type V collagen into large C-terminal three quarter fragments and shorter N-terminal one quarter fragments. Degrades fibronectin but not laminin or Pz-peptide. The sequence is that of Matrix metalloproteinase-9 from Oryctolagus cuniculus (Rabbit).